The following is a 388-amino-acid chain: Succinate--CoA ligase [ADP-forming] subunit beta (388 aa).

One can recognise an ATP-grasp domain in the interval 9–244 (KSLFAEYGLP…PSQDDAREAH (236 aa)). ATP is bound by residues Lys46, 53 to 55 (GRG), Glu99, Thr102, and Glu107. 2 residues coordinate Mg(2+): Asn199 and Asp213. Substrate-binding positions include Asn264 and 321-323 (GIV).

It belongs to the succinate/malate CoA ligase beta subunit family. As to quaternary structure, heterotetramer of two alpha and two beta subunits. Mg(2+) is required as a cofactor.

It carries out the reaction succinate + ATP + CoA = succinyl-CoA + ADP + phosphate. The enzyme catalyses GTP + succinate + CoA = succinyl-CoA + GDP + phosphate. It functions in the pathway carbohydrate metabolism; tricarboxylic acid cycle; succinate from succinyl-CoA (ligase route): step 1/1. Its function is as follows. Succinyl-CoA synthetase functions in the citric acid cycle (TCA), coupling the hydrolysis of succinyl-CoA to the synthesis of either ATP or GTP and thus represents the only step of substrate-level phosphorylation in the TCA. The beta subunit provides nucleotide specificity of the enzyme and binds the substrate succinate, while the binding sites for coenzyme A and phosphate are found in the alpha subunit. The polypeptide is Succinate--CoA ligase [ADP-forming] subunit beta (Shewanella sp. (strain ANA-3)).